The following is a 349-amino-acid chain: Succinylglutamate desuccinylase (349 aa).

Zn(2+) is bound by residues His70, Glu73, and His166. Glu229 is a catalytic residue.

It belongs to the AspA/AstE family. Succinylglutamate desuccinylase subfamily. Requires Zn(2+) as cofactor.

The catalysed reaction is N-succinyl-L-glutamate + H2O = L-glutamate + succinate. Its pathway is amino-acid degradation; L-arginine degradation via AST pathway; L-glutamate and succinate from L-arginine: step 5/5. Functionally, transforms N(2)-succinylglutamate into succinate and glutamate. This Burkholderia thailandensis (strain ATCC 700388 / DSM 13276 / CCUG 48851 / CIP 106301 / E264) protein is Succinylglutamate desuccinylase.